A 155-amino-acid chain; its full sequence is 6,7-dimethyl-8-ribityllumazine synthase (155 aa).

5-amino-6-(D-ribitylamino)uracil is bound by residues Phe-23, 57–59, and 81–83; these read AFE and AVI. 86–87 is a binding site for (2S)-2-hydroxy-3-oxobutyl phosphate; the sequence is ST. The active-site Proton donor is His-89. A 5-amino-6-(D-ribitylamino)uracil-binding site is contributed by Phe-114. Position 128 (Arg-128) interacts with (2S)-2-hydroxy-3-oxobutyl phosphate.

The protein belongs to the DMRL synthase family.

It carries out the reaction (2S)-2-hydroxy-3-oxobutyl phosphate + 5-amino-6-(D-ribitylamino)uracil = 6,7-dimethyl-8-(1-D-ribityl)lumazine + phosphate + 2 H2O + H(+). Its pathway is cofactor biosynthesis; riboflavin biosynthesis; riboflavin from 2-hydroxy-3-oxobutyl phosphate and 5-amino-6-(D-ribitylamino)uracil: step 1/2. Its function is as follows. Catalyzes the formation of 6,7-dimethyl-8-ribityllumazine by condensation of 5-amino-6-(D-ribitylamino)uracil with 3,4-dihydroxy-2-butanone 4-phosphate. This is the penultimate step in the biosynthesis of riboflavin. This Dehalococcoides mccartyi (strain ATCC BAA-2266 / KCTC 15142 / 195) (Dehalococcoides ethenogenes (strain 195)) protein is 6,7-dimethyl-8-ribityllumazine synthase.